The primary structure comprises 101 residues: Conantokin-L (101 aa).

Positions Met-1–Gly-21 are cleaved as a signal peptide. Positions Thr-22 to Arg-80 are excised as a propeptide. 4 positions are modified to 4-carboxyglutamate: Glu-83, Glu-84, Glu-91, and Glu-95. Glu-91 and Glu-95 together coordinate a divalent metal cation. The residue at position 99 (Asn-99) is an Asparagine amide.

Belongs to the conotoxin B superfamily. Ca(2+) is required as a cofactor. It depends on Mg(2+) as a cofactor. As to expression, expressed by the venom duct.

The protein localises to the secreted. Conantokins inhibit N-methyl-D-aspartate (NMDA) receptors. This toxin is far less potent as an anticonvulsant compound than conantokin-R. It induces sleep-like symptoms in mice. In Conus lynceus (Lynceus cone), this protein is Conantokin-L.